The chain runs to 278 residues: Dermonecrotic toxin LspiSicTox-betaIE2ii (278 aa).

Residue H5 is part of the active site. The Mg(2+) site is built by E25 and D27. The Nucleophile role is filled by H41. 2 disulfide bridges follow: C45–C51 and C47–C190. Mg(2+) is bound at residue D85.

It belongs to the arthropod phospholipase D family. Class II subfamily. The cofactor is Mg(2+). In terms of tissue distribution, expressed by the venom gland.

The protein localises to the secreted. It carries out the reaction an N-(acyl)-sphingosylphosphocholine = an N-(acyl)-sphingosyl-1,3-cyclic phosphate + choline. The enzyme catalyses an N-(acyl)-sphingosylphosphoethanolamine = an N-(acyl)-sphingosyl-1,3-cyclic phosphate + ethanolamine. It catalyses the reaction a 1-acyl-sn-glycero-3-phosphocholine = a 1-acyl-sn-glycero-2,3-cyclic phosphate + choline. The catalysed reaction is a 1-acyl-sn-glycero-3-phosphoethanolamine = a 1-acyl-sn-glycero-2,3-cyclic phosphate + ethanolamine. Dermonecrotic toxins cleave the phosphodiester linkage between the phosphate and headgroup of certain phospholipids (sphingolipid and lysolipid substrates), forming an alcohol (often choline) and a cyclic phosphate. This toxin acts on sphingomyelin (SM). It may also act on ceramide phosphoethanolamine (CPE), lysophosphatidylcholine (LPC) and lysophosphatidylethanolamine (LPE), but not on lysophosphatidylserine (LPS), and lysophosphatidylglycerol (LPG). It acts by transphosphatidylation, releasing exclusively cyclic phosphate products as second products. Induces dermonecrosis, hemolysis, increased vascular permeability, edema, inflammatory response, and platelet aggregation. The protein is Dermonecrotic toxin LspiSicTox-betaIE2ii of Loxosceles spinulosa (Recluse spider).